A 295-amino-acid chain; its full sequence is MDQKQIEEIVRSVMASMGQTAPAPSEAKCATTNCAAPVTSESCALDLGSAEAKAWIGVENPHRADVLTELRRSTVARVCTGRAGPRPRTQALLRFLADHSRSKDTVLKEVPEEWVKAQGLLEVRSEISDKNLYLTRPDMGRRLCAEAVEALKAQCVANPDVQVVISDGLSTDAITVNYEEILPPLMAGLKQAGLKVGTPFFVRYGRVKIEDQIGEILGAKVVILLVGERPGLGQSESLSCYAVYSPRMATTVEADRTCISNIHQGGTPPVEAAAVIVDLAKRMLEQKASGINMTR.

Adenosylcob(III)alamin-binding residues include Val207, Glu228, and Cys258.

The protein belongs to the EutC family. The basic unit is a heterodimer which dimerizes to form tetramers. The heterotetramers trimerize; 6 large subunits form a core ring with 6 small subunits projecting outwards. The cofactor is adenosylcob(III)alamin.

The protein localises to the bacterial microcompartment. The enzyme catalyses ethanolamine = acetaldehyde + NH4(+). It participates in amine and polyamine degradation; ethanolamine degradation. Its function is as follows. Catalyzes the deamination of various vicinal amino-alcohols to oxo compounds. Allows this organism to utilize ethanolamine as the sole source of nitrogen and carbon in the presence of external vitamin B12. The polypeptide is Ethanolamine ammonia-lyase small subunit (Escherichia coli (strain 55989 / EAEC)).